Reading from the N-terminus, the 156-residue chain is Small ribosomal subunit protein uS7 (156 aa).

It belongs to the universal ribosomal protein uS7 family. Part of the 30S ribosomal subunit. Contacts proteins S9 and S11.

One of the primary rRNA binding proteins, it binds directly to 16S rRNA where it nucleates assembly of the head domain of the 30S subunit. Is located at the subunit interface close to the decoding center, probably blocks exit of the E-site tRNA. This is Small ribosomal subunit protein uS7 from Shewanella sediminis (strain HAW-EB3).